Here is a 346-residue protein sequence, read N- to C-terminus: DNA-directed RNA polymerase subunit alpha (346 aa).

The interval 1-243 is alpha N-terminal domain (alpha-NTD); that stretch reads MTMNNPNLTM…EQLSIWVNFE (243 aa). The interval 260–346 is alpha C-terminal domain (alpha-CTD); the sequence is LNENLFRSVE…ERWKAQQAQA (87 aa).

It belongs to the RNA polymerase alpha chain family. As to quaternary structure, homodimer. The RNAP catalytic core consists of 2 alpha, 1 beta, 1 beta' and 1 omega subunit. When a sigma factor is associated with the core the holoenzyme is formed, which can initiate transcription.

The catalysed reaction is RNA(n) + a ribonucleoside 5'-triphosphate = RNA(n+1) + diphosphate. DNA-dependent RNA polymerase catalyzes the transcription of DNA into RNA using the four ribonucleoside triphosphates as substrates. The sequence is that of DNA-directed RNA polymerase subunit alpha from Sorangium cellulosum (strain So ce56) (Polyangium cellulosum (strain So ce56)).